A 350-amino-acid polypeptide reads, in one-letter code: Protein memo-1 homolog (350 aa).

This sequence belongs to the MEMO1 family. In terms of assembly, interacts with rho-1. As to expression, expressed in neuronal and non-neuronal cells in the head and tail, pharyngeal cells, spermatheca, distal tip cells, anchor cell and the intestine.

Plays a role in the oxidative stress response and the maintenance of longevity by regulating the interaction between GTPase rho-1 and oxidase bli-3. In turn, this serves to modulate bli-3 activity and the control of reactive oxygen species production. May control cell migration by relaying extracellular chemotactic signals to the microtubule cytoskeleton. The sequence is that of Protein memo-1 homolog from Caenorhabditis elegans.